The sequence spans 402 residues: Galactoside 2-alpha-L-fucosyltransferase (402 aa).

The Cytoplasmic segment spans residues 1–6; it reads MRYNSN. A helical; Signal-anchor for type II membrane protein transmembrane segment spans residues 7 to 27; that stretch reads YLMYFCLVLGIFANIYVIIKI. The Lumenal portion of the chain corresponds to 28–402; it reads TLGSSHILEY…TDLNGKISKY (375 aa). Asparagine 119, asparagine 175, and asparagine 301 each carry an N-linked (GlcNAc...) asparagine glycan.

The protein belongs to the glycosyltransferase 11 family. May form oligomers. Post-translationally, N-glycosylated. In terms of tissue distribution, expression is restricted to pharyngeal neurons and gland cells.

The protein localises to the golgi apparatus. It localises to the golgi stack membrane. The protein operates within protein modification; protein glycosylation. Selectively catalyzes the addition of fucose in alpha 1-2 linkage to Gal-beta-(1-&gt;3)-GalNAc-alpha-R, Gal-beta-(1-&gt;3)-(GlcNAc-beta-(1-&gt;6))-GalNAc-alpha-R and Gal-beta-(1-&gt;3)-GalNAc acceptors but not Gal-beta-(1-&gt;3)-GlcNAc-beta-(1-&gt;3)-Gal-beta-(1-&gt;4)-Glc in vitro. In Caenorhabditis elegans, this protein is Galactoside 2-alpha-L-fucosyltransferase.